A 287-amino-acid chain; its full sequence is Glycine--tRNA ligase alpha subunit (287 aa).

This sequence belongs to the class-II aminoacyl-tRNA synthetase family. In terms of assembly, tetramer of two alpha and two beta subunits.

Its subcellular location is the cytoplasm. The catalysed reaction is tRNA(Gly) + glycine + ATP = glycyl-tRNA(Gly) + AMP + diphosphate. The protein is Glycine--tRNA ligase alpha subunit of Campylobacter jejuni subsp. jejuni serotype O:23/36 (strain 81-176).